An 814-amino-acid chain; its full sequence is ATP-dependent RNA helicase dbp-7 (814 aa).

Residues 26–102 (GGRWRDRVKA…PPPPPTHAMK (77 aa)) are disordered. Composition is skewed to basic and acidic residues over residues 28–42 (RWRD…EKGG) and 69–78 (QRTEDGDSGR). The short motif at 145–174 (ENFLSLGLSRRVSQHLATKLEMKAPTAIQK) is the Q motif element. Residues 178–384 (PQLVKEDSDA…EISLEDAVHI (207 aa)) form the Helicase ATP-binding domain. Residue 191–198 (AETGSGKT) participates in ATP binding. The DEAD box motif lies at 313-316 (DEGD). Positions 422 to 622 (RLVTLIALLK…GFATNINVPG (201 aa)) constitute a Helicase C-terminal domain. Disordered regions lie at residues 464–483 (TPRA…KPNI), 662–695 (ESKS…PLLV), and 741–795 (GIGG…AGRR). A compositionally biased stretch (basic and acidic residues) spans 467 to 477 (AEPEPKPEGEA). Positions 779–790 (DDDERDFGAADE) are enriched in acidic residues.

Belongs to the DEAD box helicase family. DDX31/DBP7 subfamily.

It is found in the nucleus. It localises to the nucleolus. It carries out the reaction ATP + H2O = ADP + phosphate + H(+). In terms of biological role, ATP-binding RNA helicase involved in the biogenesis of 60S ribosomal subunits and is required for the normal formation of 25S and 5.8S rRNAs. The protein is ATP-dependent RNA helicase dbp-7 (dbp-7) of Neurospora crassa (strain ATCC 24698 / 74-OR23-1A / CBS 708.71 / DSM 1257 / FGSC 987).